The chain runs to 212 residues: Octanoyltransferase (212 aa).

In terms of domain architecture, BPL/LPL catalytic spans 31–209 (AETQDEIWLV…HFANLLGYNI (179 aa)). Residues 70–77 (RGGQITYH), 138–140 (SLG), and 151–153 (GLA) each bind substrate. The Acyl-thioester intermediate role is filled by Cys169.

It belongs to the LipB family.

It is found in the cytoplasm. It catalyses the reaction octanoyl-[ACP] + L-lysyl-[protein] = N(6)-octanoyl-L-lysyl-[protein] + holo-[ACP] + H(+). The protein operates within protein modification; protein lipoylation via endogenous pathway; protein N(6)-(lipoyl)lysine from octanoyl-[acyl-carrier-protein]: step 1/2. Catalyzes the transfer of endogenously produced octanoic acid from octanoyl-acyl-carrier-protein onto the lipoyl domains of lipoate-dependent enzymes. Lipoyl-ACP can also act as a substrate although octanoyl-ACP is likely to be the physiological substrate. The polypeptide is Octanoyltransferase (Haemophilus influenzae (strain ATCC 51907 / DSM 11121 / KW20 / Rd)).